The chain runs to 1072 residues: Carbamoyl phosphate synthase large chain (1072 aa).

The segment at 1–401 is carboxyphosphate synthetic domain; it reads MPKYKDINKV…SLLKAVRSLE (401 aa). Residues R129, R169, G175, G176, K208, L210, E215, G241, V242, H243, Q284, and E298 each contribute to the ATP site. Residues 133–327 enclose the ATP-grasp 1 domain; it reads KRKMQEIGEP…IAKVAAKIAI (195 aa). Mg(2+)-binding residues include Q284, E298, and N300. Mn(2+) is bound by residues Q284, E298, and N300. Residues 402–544 are oligomerization domain; that stretch reads IKAYGLRLNN…YIYSTYGEED (143 aa). The interval 545 to 929 is carbamoyl phosphate synthetic domain; the sequence is EVEIHEIPKV…ALYKALEGAG (385 aa). An ATP-grasp 2 domain is found at 671–861; sequence SKLLKELNIN…MVKLAVEVAL (191 aa). ATP contacts are provided by R707, K746, I748, E752, G777, V778, H779, S780, Q820, and E832. Residues Q820, E832, and N834 each coordinate Mg(2+). Residues Q820, E832, and N834 each coordinate Mn(2+). An MGS-like domain is found at 930–1072; the sequence is LKIPKKGKIL…QKDNVKNLVL (143 aa). The interval 930–1072 is allosteric domain; it reads LKIPKKGKIL…QKDNVKNLVL (143 aa).

Belongs to the CarB family. As to quaternary structure, composed of two chains; the small (or glutamine) chain promotes the hydrolysis of glutamine to ammonia, which is used by the large (or ammonia) chain to synthesize carbamoyl phosphate. Tetramer of heterodimers (alpha,beta)4. The cofactor is Mg(2+). Mn(2+) serves as cofactor.

It catalyses the reaction hydrogencarbonate + L-glutamine + 2 ATP + H2O = carbamoyl phosphate + L-glutamate + 2 ADP + phosphate + 2 H(+). The catalysed reaction is hydrogencarbonate + NH4(+) + 2 ATP = carbamoyl phosphate + 2 ADP + phosphate + 2 H(+). The protein operates within amino-acid biosynthesis; L-arginine biosynthesis; carbamoyl phosphate from bicarbonate: step 1/1. It functions in the pathway pyrimidine metabolism; UMP biosynthesis via de novo pathway; (S)-dihydroorotate from bicarbonate: step 1/3. Its function is as follows. Large subunit of the glutamine-dependent carbamoyl phosphate synthetase (CPSase). CPSase catalyzes the formation of carbamoyl phosphate from the ammonia moiety of glutamine, carbonate, and phosphate donated by ATP, constituting the first step of 2 biosynthetic pathways, one leading to arginine and/or urea and the other to pyrimidine nucleotides. The large subunit (synthetase) binds the substrates ammonia (free or transferred from glutamine from the small subunit), hydrogencarbonate and ATP and carries out an ATP-coupled ligase reaction, activating hydrogencarbonate by forming carboxy phosphate which reacts with ammonia to form carbamoyl phosphate. In Thermoanaerobacter sp. (strain X514), this protein is Carbamoyl phosphate synthase large chain.